Consider the following 314-residue polypeptide: Putative S-adenosyl-L-methionine-dependent methyltransferase MUL_4402 (314 aa).

Residues D132 and 161–162 (DL) contribute to the S-adenosyl-L-methionine site. The tract at residues 291–314 (RPVPDDAEGPVPPTLFVSAHRPAA) is disordered.

Belongs to the UPF0677 family.

Its function is as follows. Exhibits S-adenosyl-L-methionine-dependent methyltransferase activity. The chain is Putative S-adenosyl-L-methionine-dependent methyltransferase MUL_4402 from Mycobacterium ulcerans (strain Agy99).